The following is a 95-amino-acid chain: Aspartyl/glutamyl-tRNA(Asn/Gln) amidotransferase subunit C (95 aa).

Belongs to the GatC family. Heterotrimer of A, B and C subunits.

The enzyme catalyses L-glutamyl-tRNA(Gln) + L-glutamine + ATP + H2O = L-glutaminyl-tRNA(Gln) + L-glutamate + ADP + phosphate + H(+). It catalyses the reaction L-aspartyl-tRNA(Asn) + L-glutamine + ATP + H2O = L-asparaginyl-tRNA(Asn) + L-glutamate + ADP + phosphate + 2 H(+). Allows the formation of correctly charged Asn-tRNA(Asn) or Gln-tRNA(Gln) through the transamidation of misacylated Asp-tRNA(Asn) or Glu-tRNA(Gln) in organisms which lack either or both of asparaginyl-tRNA or glutaminyl-tRNA synthetases. The reaction takes place in the presence of glutamine and ATP through an activated phospho-Asp-tRNA(Asn) or phospho-Glu-tRNA(Gln). The polypeptide is Aspartyl/glutamyl-tRNA(Asn/Gln) amidotransferase subunit C (Syntrophotalea carbinolica (strain DSM 2380 / NBRC 103641 / GraBd1) (Pelobacter carbinolicus)).